The chain runs to 349 residues: Protein RecA (349 aa).

An ATP-binding site is contributed by 65–72; sequence GPESSGKT.

This sequence belongs to the RecA family.

It is found in the cytoplasm. Its function is as follows. Can catalyze the hydrolysis of ATP in the presence of single-stranded DNA, the ATP-dependent uptake of single-stranded DNA by duplex DNA, and the ATP-dependent hybridization of homologous single-stranded DNAs. It interacts with LexA causing its activation and leading to its autocatalytic cleavage. This chain is Protein RecA, found in Vibrio vulnificus (strain CMCP6).